Reading from the N-terminus, the 356-residue chain is Histidinol-phosphate aminotransferase (356 aa).

N6-(pyridoxal phosphate)lysine is present on Lys-211.

This sequence belongs to the class-II pyridoxal-phosphate-dependent aminotransferase family. Histidinol-phosphate aminotransferase subfamily. As to quaternary structure, homodimer. Pyridoxal 5'-phosphate serves as cofactor.

It catalyses the reaction L-histidinol phosphate + 2-oxoglutarate = 3-(imidazol-4-yl)-2-oxopropyl phosphate + L-glutamate. It participates in amino-acid biosynthesis; L-histidine biosynthesis; L-histidine from 5-phospho-alpha-D-ribose 1-diphosphate: step 7/9. In Aeromonas hydrophila subsp. hydrophila (strain ATCC 7966 / DSM 30187 / BCRC 13018 / CCUG 14551 / JCM 1027 / KCTC 2358 / NCIMB 9240 / NCTC 8049), this protein is Histidinol-phosphate aminotransferase.